The sequence spans 90 residues: Sec-independent protein translocase protein TatAo (90 aa).

Residues 8 to 28 traverse the membrane as a helical segment; that stretch reads FPGLPGGPELLIVLLIVVLLF. The tract at residues 39–90 is disordered; it reads SSGQAMGEFRRGREEIEEELKKGAEGGDDEGENGDEAEADDADATETEAESR. Over residues 46 to 63 the composition is skewed to basic and acidic residues; it reads EFRRGREEIEEELKKGAE. Residues 64-90 show a composition bias toward acidic residues; that stretch reads GGDDEGENGDEAEADDADATETEAESR.

The protein belongs to the TatA/E family. In terms of assembly, forms a complex with TatC. Cytoplasmic and membrane-bound TatA form high-molecular-weight complexes.

The protein resides in the cell membrane. The protein localises to the cytoplasm. Its function is as follows. Part of the twin-arginine translocation (Tat) system that transports large folded proteins containing a characteristic twin-arginine motif in their signal peptide across membranes. TatA could form the protein-conducting channel of the Tat system. This Haloferax volcanii (strain ATCC 29605 / DSM 3757 / JCM 8879 / NBRC 14742 / NCIMB 2012 / VKM B-1768 / DS2) (Halobacterium volcanii) protein is Sec-independent protein translocase protein TatAo.